Reading from the N-terminus, the 411-residue chain is UPF0261 protein SACE_5696 (411 aa).

Belongs to the UPF0261 family.

This chain is UPF0261 protein SACE_5696, found in Saccharopolyspora erythraea (strain ATCC 11635 / DSM 40517 / JCM 4748 / NBRC 13426 / NCIMB 8594 / NRRL 2338).